Consider the following 164-residue polypeptide: Thiol peroxidase (164 aa).

In terms of domain architecture, Thioredoxin spans 18–163; the sequence is VKTGETAPEF…FESALEAYRN (146 aa). The active-site Cysteine sulfenic acid (-SOH) intermediate is the Cys60. A disulfide bridge links Cys60 with Cys93.

This sequence belongs to the peroxiredoxin family. Tpx subfamily. Homodimer.

The catalysed reaction is a hydroperoxide + [thioredoxin]-dithiol = an alcohol + [thioredoxin]-disulfide + H2O. Functionally, thiol-specific peroxidase that catalyzes the reduction of hydrogen peroxide and organic hydroperoxides to water and alcohols, respectively. Plays a role in cell protection against oxidative stress by detoxifying peroxides. The sequence is that of Thiol peroxidase from Staphylococcus saprophyticus subsp. saprophyticus (strain ATCC 15305 / DSM 20229 / NCIMB 8711 / NCTC 7292 / S-41).